Consider the following 399-residue polypeptide: Tyrosine--tRNA ligase 2 (399 aa).

The 'HIGH' region signature appears at 41–50; the sequence is PTAPDLHLGH. Positions 225 to 229 match the 'KMSKS' region motif; it reads KMSKS. Lys228 is a binding site for ATP. The S4 RNA-binding domain occupies 336 to 398; that stretch reads ILIANLLKEA…GKRKFANITV (63 aa).

It belongs to the class-I aminoacyl-tRNA synthetase family. TyrS type 2 subfamily. In terms of assembly, homodimer.

Its subcellular location is the cytoplasm. The enzyme catalyses tRNA(Tyr) + L-tyrosine + ATP = L-tyrosyl-tRNA(Tyr) + AMP + diphosphate + H(+). Its function is as follows. Catalyzes the attachment of tyrosine to tRNA(Tyr) in a two-step reaction: tyrosine is first activated by ATP to form Tyr-AMP and then transferred to the acceptor end of tRNA(Tyr). This chain is Tyrosine--tRNA ligase 2, found in Pseudoalteromonas translucida (strain TAC 125).